A 438-amino-acid polypeptide reads, in one-letter code: UDP-N-acetylmuramoylalanine--D-glutamate ligase (438 aa).

112 to 118 (GSNGKST) provides a ligand contact to ATP.

The protein belongs to the MurCDEF family.

It localises to the cytoplasm. The catalysed reaction is UDP-N-acetyl-alpha-D-muramoyl-L-alanine + D-glutamate + ATP = UDP-N-acetyl-alpha-D-muramoyl-L-alanyl-D-glutamate + ADP + phosphate + H(+). It participates in cell wall biogenesis; peptidoglycan biosynthesis. Its function is as follows. Cell wall formation. Catalyzes the addition of glutamate to the nucleotide precursor UDP-N-acetylmuramoyl-L-alanine (UMA). The polypeptide is UDP-N-acetylmuramoylalanine--D-glutamate ligase (Salmonella paratyphi A (strain ATCC 9150 / SARB42)).